Here is a 152-residue protein sequence, read N- to C-terminus: SUZ RNA-binding domain-containing (152 aa).

Residue methionine 1 is modified to N-acetylmethionine. Disordered regions lie at residues 30–86 (TQKE…LPVK) and 99–152 (RKRI…KQRR). 3 positions are modified to phosphoserine: serine 37, serine 39, and serine 51. Residues 42 to 107 (KVPIVIQDDS…ARKRILGSAS (66 aa)) enclose the SUZ domain. A compositionally biased stretch (polar residues) spans 66 to 79 (PTSNGVVSGPNSAS). Residues serine 105 and serine 107 each carry the phosphoserine modification. The SUZ-C domain occupies 111–152 (EQEKPILDRPTRISQPEDSRQPNNVIRQPLGPDGSQGFKQRR). Residues 113–130 (EKPILDRPTRISQPEDSR) show a composition bias toward basic and acidic residues.

The protein belongs to the SZRD1 family.

This Bos taurus (Bovine) protein is SUZ RNA-binding domain-containing (SZRD1).